Reading from the N-terminus, the 1117-residue chain is Endogenous retrovirus group K member 9 Pol protein (1117 aa).

The N-myristoyl glycine moiety is linked to residue glycine 2. Residues 58–195 enclose the Reverse transcriptase domain; that stretch reads KDWKRIGKEL…AGQVPVTLQP (138 aa). The tract at residues 165 to 264 is disordered; that stretch reads GKGPELVGPS…APPSRQGSEL (100 aa). Residues 232-247 show a composition bias toward pro residues; the sequence is GMPPAPQGRAPYPQPP. CCHC-type zinc fingers lie at residues 544 to 561 and 580 to 597; these read GKCY…NCPV and DLCP…QCRS. Residues 598–629 form a disordered region; it reads KFDKNGQPLSGNEQRGQPQAPQQTGAFPIQPF. The span at 604–622 shows a compositional bias: polar residues; sequence QPLSGNEQRGQPQAPQQTG. In terms of domain architecture, Peptidase A2 spans 800–875; it reads FEGLVDTGAD…IPLNLWGRDL (76 aa). Residue aspartate 805 is part of the active site. The 47-residue stretch at 890–936 folds into the G-patch domain; the sequence is YSPTSQKIMTKRGYIPGKGLGKNEDGIKIPFEAKINQKREGIGYPFL.

The protein belongs to the beta type-B retroviral polymerase family. HERV class-II K(HML-2) pol subfamily. Post-translationally, myristoylation is essential for retroviral assembly. Alteration of the glycine residue leads to a block in the budding of particles and an accumulation of Gag inside the cell. Specific enzymatic cleavages may yield mature proteins.

It localises to the cell membrane. It catalyses the reaction Processing at the authentic HIV-1 PR recognition site and release of the mature p17 matrix and the p24 capsid protein, as a result of the cleavage of the -SQNY-|-PIVQ- cleavage site.. The enzyme catalyses DNA(n) + a 2'-deoxyribonucleoside 5'-triphosphate = DNA(n+1) + diphosphate. It carries out the reaction Endonucleolytic cleavage to 5'-phosphomonoester.. Its function is as follows. The products of the Gag polyproteins of infectious retroviruses perform highly complex orchestrated tasks during the assembly, budding, maturation, and infection stages of the viral replication cycle. During viral assembly, the proteins form membrane associations and self-associations that ultimately result in budding of an immature virion from the infected cell. Gag precursors also function during viral assembly to selectively bind and package two plus strands of genomic RNA. Endogenous Gag proteins may have kept, lost or modified their original function during evolution. Early post-infection, the reverse transcriptase converts the viral RNA genome into double-stranded viral DNA. The RNase H domain of the reverse transcriptase performs two functions. It degrades the RNA template and specifically removes the RNA primer from the RNA/DNA hybrid. Following nuclear import, the integrase catalyzes the insertion of the linear, double-stranded viral DNA into the host cell chromosome. Endogenous Pol proteins may have kept, lost or modified their original function during evolution. The protein is Endogenous retrovirus group K member 9 Pol protein (ERVK-9) of Homo sapiens (Human).